Consider the following 433-residue polypeptide: Sulfhydrylase FUB7 (433 aa).

Position 211 is an N6-(pyridoxal phosphate)lysine (Lys-211).

Belongs to the trans-sulfuration enzymes family. Requires pyridoxal 5'-phosphate as cofactor.

Its pathway is mycotoxin biosynthesis. Functionally, sulfhydrylase; part of the gene cluster that mediates the biosynthesis of fusaric acid, a mycotoxin with low to moderate toxicity to animals and humans, but with high phytotoxic properties. L-aspartate is suggested as fusaric acid amino acid precursor that is activated and further processed to O-acetyl-L-homoserine by cluster enzymes aspartate kinase FUB3 and homoserine O-acetyltransferase FUB5, as well as enzymes of the primary metabolism. The polyketide synthase (PKS) FUB1 generates the triketide trans-2-hexenal which is presumptively released by the hydrolase FUB4 and linked to the NRPS-bound amino acid precursor by NAD(P)-dependent dehydrogenase FUB6. FUB1, FUB4, and the non-canonical NRPS Fub8 may form an enzyme complex. Further processing of the NRPS-bound intermediate might be carried out by FUB6 and the O-acetylhomoserine FUB7, enabling a spontaneous electrocyclization to close the carbon backbone of fusaric acid. Dihydrofusaric acid is likely to be released via reduction by the thioester reductase (TR) domain of FUB8 whereupon the final oxidation to fusaric acid may (also) be performed by the FMN-dependent dehydrogenase FUB9. In Gibberella moniliformis (strain M3125 / FGSC 7600) (Maize ear and stalk rot fungus), this protein is Sulfhydrylase FUB7.